We begin with the raw amino-acid sequence, 27 residues long: Trichocyst matrix protein T4-C (27 aa).

It belongs to the TMP family.

The protein resides in the trichocyst. Its function is as follows. Structural protein that crystallize inside the trichocyst matrix. In Paramecium tetraurelia, this protein is Trichocyst matrix protein T4-C (T4C).